Reading from the N-terminus, the 176-residue chain is MRVLFLTISLSLFSIIHADDFAFSEFKPSEGTYYVQVIAVDKEFPEDEIPRDISPLTITYLNNGKMEAKFTVKKDNNCEEINLTLEKIDEPRKITTTRHLHHICDTVRTSEEKYWILSCVREFQGTQIREAELVGPNTDENPKALEDFYRFINRERFVERRIITPRQTEACTSENA.

The signal sequence occupies residues 1–18; that stretch reads MRVLFLTISLSLFSIIHA. Residues cysteine 78 and cysteine 171 are joined by a disulfide bond.

The protein belongs to the calycin superfamily. Lipocalin family. As to expression, mammary gland specific. Secreted in milk.

It localises to the secreted. In terms of biological role, probably serves a role in the transport of a small ligand released during the hydrolysis of milk fat. The protein is Late lactation protein A (LLPA) of Notamacropus eugenii (Tammar wallaby).